Consider the following 287-residue polypeptide: uncharacterized protein (287 aa).

Disordered stretches follow at residues 109 to 175, 203 to 223, and 257 to 287; these read QEES…SSQD, IPPPTRLISEGPEEPKESQPV, and KESEKSSNETQELSSHSLEEASVHDRISSEE. The span at 110–136 shows a compositional bias: low complexity; that stretch reads EESSSSLEEGIIEDPVVATPSPASAAP. Basic and acidic residues predominate over residues 143 to 152; it reads RKEFKNEKWK. The segment covering 153-162 has biased composition (basic residues); sequence EKKKQGRRRN. Residues 273–287 are compositionally biased toward basic and acidic residues; sequence SLEEASVHDRISSEE.

This sequence belongs to the chlamydial CPn_0623/CT_504/TC_0791 family.

This is an uncharacterized protein from Chlamydia muridarum (strain MoPn / Nigg).